The following is a 483-amino-acid chain: AP-3 complex subunit mu (483 aa).

In terms of domain architecture, MHD spans 211–482 (NNELYVDLLE…KTQTGNFQVR (272 aa)).

Belongs to the adaptor complexes medium subunit family. As to quaternary structure, adaptor protein complex 3 (AP-3) is a heterotetramer composed of 2 large adaptins (APL5 and APL6), a medium adaptin (APM3) and a small adaptin (APS3).

Its subcellular location is the golgi apparatus. It localises to the cytoplasmic vesicle membrane. Its function is as follows. Part of the AP-3 complex, an adaptor-related complex which is not clathrin-associated. The complex is associated with the Golgi region as well as more peripheral structures. It facilitates the budding of vesicles from the Golgi membrane and may be directly involved in trafficking to the vacuole. Required for the transport via the ALP pathway, which directs the transport of the cargo proteins PHO8 and VAM3 to the vacuole. This is AP-3 complex subunit mu (APM3) from Saccharomyces cerevisiae (strain ATCC 204508 / S288c) (Baker's yeast).